The chain runs to 125 residues: Protein ApaG (125 aa).

The 125-residue stretch at 1–125 folds into the ApaG domain; that stretch reads MNDTPRVCVQ…FRLAIATHIH (125 aa).

This chain is Protein ApaG, found in Erwinia tasmaniensis (strain DSM 17950 / CFBP 7177 / CIP 109463 / NCPPB 4357 / Et1/99).